A 582-amino-acid polypeptide reads, in one-letter code: Aspartate--tRNA ligase (582 aa).

Residue glutamate 174 participates in L-aspartate binding. Residues 198–201 (QITK) are aspartate. Position 220 (arginine 220) interacts with L-aspartate. ATP-binding positions include 220–222 (RDE) and glutamine 229. Histidine 443 is an L-aspartate binding site. Residue glutamate 477 participates in ATP binding. Arginine 484 provides a ligand contact to L-aspartate. 529-532 (GLDR) is a binding site for ATP.

Belongs to the class-II aminoacyl-tRNA synthetase family. Type 1 subfamily. Homodimer.

It localises to the cytoplasm. The catalysed reaction is tRNA(Asp) + L-aspartate + ATP = L-aspartyl-tRNA(Asp) + AMP + diphosphate. Catalyzes the attachment of L-aspartate to tRNA(Asp) in a two-step reaction: L-aspartate is first activated by ATP to form Asp-AMP and then transferred to the acceptor end of tRNA(Asp). The chain is Aspartate--tRNA ligase from Streptococcus pyogenes serotype M1.